We begin with the raw amino-acid sequence, 31 residues long: uncharacterized protein (31 aa).

A helical transmembrane segment spans residues 7-29; it reads TVVLINFFAAVGLFTLISMRFGW.

Its subcellular location is the cell inner membrane. This is an uncharacterized protein from Escherichia coli (strain K12).